We begin with the raw amino-acid sequence, 560 residues long: Phenol regulator MopR (560 aa).

H106 and W134 together coordinate phenol. C155, E178, C181, and C189 together coordinate Zn(2+). One can recognise a Sigma-54 factor interaction domain in the interval 245–474 (AVGESVAYRK…LENLLERATL (230 aa)). ATP contacts are provided by residues 273-280 (GETGVGKE) and 336-345 (AHGGTIFLDE).

In terms of assembly, homodimer.

With respect to regulation, activity is triggered by phenol binding. Involved in the regulation of the phenol degradation pathway. Activates phenol hydroxylase expression in the presence of phenol. The polypeptide is Phenol regulator MopR (Acinetobacter guillouiae (Acinetobacter genomosp. 11)).